The following is a 338-amino-acid chain: Lipoate-protein ligase A (338 aa).

Positions 29–216 (PATQRVLFLW…AFFAHYGERV (188 aa)) constitute a BPL/LPL catalytic domain. Residues Arg71, 76-79 (GAVF), and Lys134 contribute to the ATP site. Lys134 is a binding site for (R)-lipoate.

This sequence belongs to the LplA family. As to quaternary structure, monomer.

It localises to the cytoplasm. It carries out the reaction L-lysyl-[lipoyl-carrier protein] + (R)-lipoate + ATP = N(6)-[(R)-lipoyl]-L-lysyl-[lipoyl-carrier protein] + AMP + diphosphate + H(+). It participates in protein modification; protein lipoylation via exogenous pathway; protein N(6)-(lipoyl)lysine from lipoate: step 1/2. Its pathway is protein modification; protein lipoylation via exogenous pathway; protein N(6)-(lipoyl)lysine from lipoate: step 2/2. In terms of biological role, catalyzes both the ATP-dependent activation of exogenously supplied lipoate to lipoyl-AMP and the transfer of the activated lipoyl onto the lipoyl domains of lipoate-dependent enzymes. The protein is Lipoate-protein ligase A of Salmonella typhimurium (strain LT2 / SGSC1412 / ATCC 700720).